The primary structure comprises 872 residues: Adhesive plaque matrix protein (872 aa).

Positions 1-20 (MEGIKLNLCLLCIFSCDIFA) are cleaved as a signal peptide. A nonrepetitive linker region spans residues 21 to 41 (LSNGNIHNVYGSAYSGASAGA). 69 tandem repeats follow at residues 124-133 (YKAKTSYPPS), 134-143 (YKHKITYPPT), 144-153 (YKPKITYPPT), 154-163 (YKQKPSYPPS), 174-183 (YKPKITYPPT), 184-192 (YKRKPSYTP), 193-202 (YKPKATYPPT), 203-212 (YKPKITYPPT), 213-221 (YKRKPSYTP), 222-231 (YKPKTTYPPT), 232-241 (YKPKISYPSI), 242-251 (YKPKASYVSS), 252-261 (YKSKKTYPPT), 262-271 (YKPKISYPPT), 272-281 (YKPKPSYPPT), 282-291 (YKPKVTYPPT), 292-301 (YKPKPSYPPT), 302-311 (YKPKITYPPT), 312-321 (YKPKPSYPTP), 322-331 (YKQKPSYPPI), 332-341 (YKSKSSYPTS), 342-351 (YKSKKTYPPT), 352-361 (YKPKITYPPT), 362-371 (YKPKPSYPPS), 372-381 (YKPKKTYSPT), 382-391 (YKPKITYPPT), 402-411 (YKPKTTYPPT), 412-421 (YKPKISYPPT), 422-431 (YKPKASYVSS), 432-441 (YKSKKTYPPT), 442-451 (YKPKISYPPT), 452-461 (YKPKPSYPPT), 462-471 (YKPKITYPPT), 472-481 (YKPKPSYPPT), 482-491 (YKPKITYPPT), 502-511 (YKQKPSYPPI), 512-521 (YKSKSSYPTS), 522-531 (YKSKKTYPPT), 532-541 (YKPKITYPPT), 542-551 (YKPKPSYPPS), 552-561 (YKPKTTYPPT), 562-571 (YKPKIRYPPT), 572-581 (YKPKASYPPT), 582-591 (YKPKITYPPT), 602-611 (YKQKPSYPPI), 612-621 (YKSKSSYPTA), 622-631 (YKSKKTYPPT), 632-641 (YKPKITYPPT), 642-651 (YKPKPSYPPS), 652-661 (YRPKITYPPT), 662-671 (YKPKKSYPQA), 672-681 (YKSKGSYPPS), 682-691 (YQPKKTYPPS), 702-711 (YKPKISYPPT), 712-721 (YKTKPSYPAS), 722-731 (YKRKTSYPPT), 732-741 (YKPKISYPST), 742-751 (YKAKPSYPPT), 752-761 (YKPKPSYASS), 762-771 (YKPKIRYPPT), 772-781 (YKPKPSYASS), 782-791 (YKPKIRYPPT), 792-801 (YKPKPSYASS), 812-821 (YKPKPSYASS), 822-831 (YKPKITYPPT), 832-841 (YKPKISYPPT), 842-851 (YKPKITYPPT), 852-861 (YKPKISYPPA), and 862-871 (YKPKISYPSQ). The tract at residues 124–871 (YKAKTSYPPS…YKPKISYPSQ (748 aa)) is 69 X 10 AA tandem repeats of Y-[KRQ]-[PSTAHQR]-K-[AIPTSKGV]-[STR]-Y-[PTSVA]-[PSTQA]-[STYIPAQ]. The nonapeptide 1 stretch occupies residues 184-192 (YKRKPSYTP). Residues 213–221 (YKRKPSYTP) are nonapeptide 2. 2 stretches are compositionally biased toward pro residues: residues 273–282 (KPKPSYPPTY) and 291–302 (TYKPKPSYPPTY). The disordered stretch occupies residues 273–781 (KPKPSYPPTY…YKPKPSYASS (509 aa)). The segment covering 320–360 (TPYKQKPSYPPIYKSKSSYPTSYKSKKTYPPTYKPKITYPP) has biased composition (low complexity). Over residues 361-372 (TYKPKPSYPPSY) the composition is skewed to pro residues. Residues 377-390 (TYSPTYKPKITYPP) show a composition bias toward low complexity. The span at 391 to 402 (TYKPKPSYPPSY) shows a compositional bias: pro residues. Low complexity predominate over residues 403 to 450 (KPKTTYPPTYKPKISYPPTYKPKASYVSSYKSKKTYPPTYKPKISYPP). Composition is skewed to pro residues over residues 451–462 (TYKPKPSYPPTY) and 471–482 (TYKPKPSYPPTY). The span at 501–540 (PYKQKPSYPPIYKSKSSYPTSYKSKKTYPPTYKPKITYPP) shows a compositional bias: low complexity. Positions 541 to 552 (TYKPKPSYPPSY) are enriched in pro residues. Low complexity-rich tracts occupy residues 568–590 (YPPT…TYPP) and 600–640 (TPYK…TYPP). The segment covering 641–652 (TYKPKPSYPPSY) has biased composition (pro residues). Composition is skewed to low complexity over residues 677–690 (SYPP…TYPP) and 698–719 (YPPT…PSYP). The span at 754 to 763 (PKPSYASSYK) shows a compositional bias: low complexity.

Post-translationally, hydroxylated on proline (mono- or dihydroxylation) and tyrosine residues (to L-DOPA = 3',4'-dihydroxyphenylalanine) of the tandem repeats. In terms of tissue distribution, produced by the byssal gland.

It localises to the secreted. Provides adhesiveness to the mussel's foot. Mussels produce one of the strongest water insoluble glues. The mussel's adhesive is a bundle of threads, called a byssus, formed by a fibrous collagenous core coated with adhesive proteins. The chain is Adhesive plaque matrix protein (FP1) from Mytilus coruscus (Sea mussel).